Here is a 93-residue protein sequence, read N- to C-terminus: UPF0728 protein C10orf53 (93 aa).

It belongs to the UPF0728 family.

This chain is UPF0728 protein C10orf53 (C10orf53), found in Homo sapiens (Human).